We begin with the raw amino-acid sequence, 81 residues long: uncharacterized protein (81 aa).

An N-terminal signal peptide occupies residues Met-1–Pro-24. The Extracellular segment spans residues Asn-25–Leu-28. A helical transmembrane segment spans residues Phe-29–Val-49. Topologically, residues Lys-50–Ile-81 are cytoplasmic.

Its subcellular location is the cell membrane. This is an uncharacterized protein from Bacillus subtilis (strain 168).